Here is a 386-residue protein sequence, read N- to C-terminus: Succinate--CoA ligase [ADP-forming] subunit beta (386 aa).

An ATP-grasp domain is found at 9-244 (KQILKKYGAV…LNEEDPTEID (236 aa)). ATP-binding positions include K46, 53 to 55 (GRG), E99, S102, and E107. 2 residues coordinate Mg(2+): N199 and D213. Residues N264 and 321–323 (GIM) contribute to the substrate site.

The protein belongs to the succinate/malate CoA ligase beta subunit family. Heterotetramer of two alpha and two beta subunits. The cofactor is Mg(2+).

It carries out the reaction succinate + ATP + CoA = succinyl-CoA + ADP + phosphate. The enzyme catalyses GTP + succinate + CoA = succinyl-CoA + GDP + phosphate. Its pathway is carbohydrate metabolism; tricarboxylic acid cycle; succinate from succinyl-CoA (ligase route): step 1/1. Succinyl-CoA synthetase functions in the citric acid cycle (TCA), coupling the hydrolysis of succinyl-CoA to the synthesis of either ATP or GTP and thus represents the only step of substrate-level phosphorylation in the TCA. The beta subunit provides nucleotide specificity of the enzyme and binds the substrate succinate, while the binding sites for coenzyme A and phosphate are found in the alpha subunit. The protein is Succinate--CoA ligase [ADP-forming] subunit beta of Pelagibacter ubique (strain HTCC1062).